The chain runs to 216 residues: Ras-related protein Rab-11A (216 aa).

Residue G2 is modified to N-acetylglycine. GTP contacts are provided by S20, G21, V22, G23, K24, S25, N26, N37, L38, S40, S42, and T43. S25 provides a ligand contact to Mg(2+). The Switch 1 motif lies at 36–47 (FNLESKSTIGVE). T43 and D66 together coordinate Mg(2+). The short motif at 67–86 (TAGQERYRAITSAYYRGAVG) is the Switch 2 element. 6 residues coordinate GTP: G69, N124, K125, D127, A155, and L156. Residues 183–208 (DRRENDMSPSNNVVPIHVPPTTENKP) form a disordered region. Residues C212 and C213 are each lipidated (S-geranylgeranyl cysteine). Cysteine methyl ester is present on C213. The propeptide at 214–216 (QNI) is removed in mature form.

This sequence belongs to the small GTPase superfamily. Rab family. The cofactor is Mg(2+).

The protein resides in the cell membrane. The protein localises to the endosome membrane. It is found in the recycling endosome membrane. It localises to the cleavage furrow. Its subcellular location is the cytoplasmic vesicle. The protein resides in the phagosome. The protein localises to the cytoplasmic vesicle membrane. It is found in the golgi apparatus. It localises to the trans-Golgi network. The catalysed reaction is GTP + H2O = GDP + phosphate + H(+). With respect to regulation, regulated by guanine nucleotide exchange factors (GEFs) which promote the exchange of bound GDP for free GTP. Regulated by GTPase activating proteins (GAPs) which increase the GTP hydrolysis activity. Inhibited by GDP dissociation inhibitors (GDIs) which prevent Rab-GDP dissociation. The small GTPases Rab are key regulators of intracellular membrane trafficking, from the formation of transport vesicles to their fusion with membranes. Rabs cycle between an inactive GDP-bound form and an active GTP-bound form that is able to recruit to membranes different set of downstream effectors directly responsible for vesicle formation, movement, tethering and fusion. The small Rab GTPase RAB11A regulates endocytic recycling. May also be involved in the regulation of preciliary trafficking and neosynthesized protein export. The sequence is that of Ras-related protein Rab-11A (RAB11A) from Gallus gallus (Chicken).